We begin with the raw amino-acid sequence, 156 residues long: Small ribosomal subunit protein uS7 (156 aa).

The protein belongs to the universal ribosomal protein uS7 family. In terms of assembly, part of the 30S ribosomal subunit. Contacts proteins S9 and S11.

Functionally, one of the primary rRNA binding proteins, it binds directly to 16S rRNA where it nucleates assembly of the head domain of the 30S subunit. Is located at the subunit interface close to the decoding center, probably blocks exit of the E-site tRNA. In Staphylococcus carnosus (strain TM300), this protein is Small ribosomal subunit protein uS7.